A 499-amino-acid polypeptide reads, in one-letter code: Apolipoprotein N-acyltransferase (499 aa).

6 helical membrane-spanning segments follow: residues 18-38 (FSPYNFWPASIISIFGLLIIT), 50-70 (LGFLWGIGNFFNEIYWIYISI), 82-102 (IIIILLLSSYLSLYPTIFVIL), 105-125 (FFFPKINFFLFCVGAPSAWMI), 156-176 (PIIGVSGISYILIIISGMCVL), and 182-202 (SYYPIIFIIFIITLTYPLNFF). The 245-residue stretch at 217-461 (IQGNISQHTY…NDFLLEEVFS (245 aa)) folds into the CN hydrolase domain. The active-site Proton acceptor is the E257. K320 is a catalytic residue. The active-site Nucleophile is C372. The chain crosses the membrane as a helical span at residues 476–496 (LLFFSIICFIISFFIKIKLIF).

Belongs to the CN hydrolase family. Apolipoprotein N-acyltransferase subfamily.

It localises to the cell membrane. It catalyses the reaction N-terminal S-1,2-diacyl-sn-glyceryl-L-cysteinyl-[lipoprotein] + a glycerophospholipid = N-acyl-S-1,2-diacyl-sn-glyceryl-L-cysteinyl-[lipoprotein] + a 2-acyl-sn-glycero-3-phospholipid + H(+). It functions in the pathway protein modification; lipoprotein biosynthesis (N-acyl transfer). Functionally, catalyzes the phospholipid dependent N-acylation of the N-terminal cysteine of apolipoprotein, the last step in lipoprotein maturation. The polypeptide is Apolipoprotein N-acyltransferase (Wigglesworthia glossinidia brevipalpis).